The following is a 368-amino-acid chain: D-alanine--D-alanine ligase (368 aa).

In terms of domain architecture, ATP-grasp spans lysine 151 to aspartate 358. Arginine 179 to glutamate 234 provides a ligand contact to ATP. Residues aspartate 313, glutamate 325, and asparagine 327 each contribute to the Mg(2+) site.

This sequence belongs to the D-alanine--D-alanine ligase family. The cofactor is Mg(2+). Requires Mn(2+) as cofactor.

It localises to the cytoplasm. It carries out the reaction 2 D-alanine + ATP = D-alanyl-D-alanine + ADP + phosphate + H(+). The protein operates within cell wall biogenesis; peptidoglycan biosynthesis. Its function is as follows. Cell wall formation. The protein is D-alanine--D-alanine ligase of Rhodococcus opacus (strain B4).